The chain runs to 200 residues: Thymidine kinase (200 aa).

ATP-binding positions include 15 to 22 (GPMYSGKS) and 88 to 91 (DEVQ). The Proton acceptor role is filled by glutamate 89. Cysteine 145, cysteine 148, cysteine 177, and cysteine 180 together coordinate Zn(2+).

Belongs to the thymidine kinase family. In terms of assembly, homotetramer.

Its subcellular location is the cytoplasm. The enzyme catalyses thymidine + ATP = dTMP + ADP + H(+). This is Thymidine kinase from Mycoplasma mobile (strain ATCC 43663 / 163K / NCTC 11711) (Mesomycoplasma mobile).